A 395-amino-acid chain; its full sequence is Teichoic acid D-alanyltransferase (395 aa).

Topologically, residues 1–6 (MTPYSS) are extracellular. A helical transmembrane segment spans residues 7–26 (FLFFILLGILLLPTIILGLN). The Cytoplasmic segment spans residues 27-30 (GKRF). Residues 31–46 (QAYNMFISIIILALIF) form a helical membrane-spanning segment. Residues 47-50 (SHDL) lie on the Extracellular side of the membrane. A helical membrane pass occupies residues 51 to 76 (HGVIALCLFTIWQVLLISGYLAYRQK). The Cytoplasmic segment spans residues 77–79 (ANS). The helical transmembrane segment at 80-104 (GFVFCGAVIASILPLFLSKIWPFLS) threads the bilayer. Residues 105 to 120 (HPQPHHPPHNLISFLG) lie on the Extracellular side of the membrane. The chain crosses the membrane as a helical span at residues 121-137 (ISYLTFKGVQLIMEARD). Over 138–145 (GLLKEQLP) the chain is Cytoplasmic. An intramembrane segment occupies 146–175 (LHRLLYFILFFPTISSGPIDRYRRFVKDEQ). At 176 to 179 (KAWT) the chain is on the cytoplasmic side. A helical transmembrane segment spans residues 180–223 (KEEYADLLYTGIHKIFIGFLYKFIIGYAINTYFIMNLPAITHNK). Isoleucine 224 is a topological domain (extracellular). A helical membrane pass occupies residues 225–256 (LGNLLYMYGYSMYLFFDFAGYTMFAVGVSYIM). Residues 257–266 (GIKSPENFNK) are Cytoplasmic-facing. The stretch at 267–303 (PFISKNIKDFWNRWHMSLSFWFRDYVFMRFVFWMTKK) is an intramembrane region. The Cytoplasmic segment spans residues 304 to 308 (KWIKN). A helical membrane pass occupies residues 309 to 328 (RMAVSNIGYFLLFMLMGVWH). Residue histidine 328 is part of the active site. The Extracellular portion of the chain corresponds to 329–333 (GLAPQ). Residues 334 to 351 (YIIYGLYHAVLMTCYNFF) traverse the membrane as a helical segment. Topologically, residues 352–364 (EKWNKKYKWLPSN) are cytoplasmic. A helical transmembrane segment spans residues 365–387 (RWTTILAIVITFHFVCFGFYIFS). The Extracellular portion of the chain corresponds to 388-395 (GKPFHHHH).

This sequence belongs to the membrane-bound acyltransferase family.

It is found in the cell membrane. The protein operates within cell wall biogenesis; lipoteichoic acid biosynthesis. O-acyltransferase that catalyzes D-alanylation of both teichoic acid and lipoteichoic acid (LTA). D-alanylation of LTA plays an important role in modulating the properties of the cell wall in Gram-positive bacteria, influencing the net charge of the cell wall. Catalyzes D-alanylation from DltC carrier protein. This chain is Teichoic acid D-alanyltransferase, found in Bacillus subtilis (strain 168).